The following is a 551-amino-acid chain: Solute carrier family 22 member 6 (551 aa).

The Cytoplasmic segment spans residues 1–23; sequence MAFNDLLKQVGGVGRFQRIQVTL. Residues 24–44 form a helical membrane-spanning segment; sequence VVLPLLLMASHNTLQNFTAAI. Residues 45 to 135 are Extracellular-facing; sequence PPHHCRPPAH…LVCSHRALRQ (91 aa). 3 N-linked (GlcNAc...) asparagine glycosylation sites follow: N56, N92, and N113. The helical transmembrane segment at 136 to 156 threads the bilayer; sequence LGQSLYMAGVLIGAMVFGYLA. Over 157–164 the chain is Cytoplasmic; that stretch reads DRLGRRKV. Residues 165–187 traverse the membrane as a helical segment; that stretch reads LILNYLQTAVSGTCAAFSPNFTV. Topologically, residues 188–195 are extracellular; it reads YCTFRLLS. The chain crosses the membrane as a helical span at residues 196–216; it reads GMSLAGIALNCMTLNVEWMPI. The Cytoplasmic portion of the chain corresponds to 217 to 224; the sequence is HTRAYVGT. The chain crosses the membrane as a helical span at residues 225–245; that stretch reads LAGYVYSTGQFLLAGVAYAVP. At 246-248 the chain is on the extracellular side; the sequence is HWR. A helical membrane pass occupies residues 249–269; that stretch reads YLQLLVSVPFFAFFVYSWFFI. Residues 270-337 lie on the Cytoplasmic side of the membrane; that stretch reads ESARWYSTPG…ELLRCPALRH (68 aa). The helical transmembrane segment at 338-358 threads the bilayer; it reads LFLCLSLLWFATSFAYYGLVM. Residues 359 to 368 are Extracellular-facing; it reads DLQGFGVSIY. Residues 369-389 traverse the membrane as a helical segment; that stretch reads LIQVIFGAVDLPAKLVCFLVI. Topologically, residues 390–395 are cytoplasmic; sequence NSLGRR. The helical transmembrane segment at 396–416 threads the bilayer; it reads PAQMASLLLAGICILVNGVIP. The Extracellular segment spans residues 417 to 425; sequence RDQSIVRTS. A helical transmembrane segment spans residues 426–446; the sequence is LAVLGKGCLASSFNCIFLYTG. The Cytoplasmic portion of the chain corresponds to 447–484; that stretch reads ELYPTMIRQTGLGMGSTMARVGSIVSPLVSMTSELYPS. A helical transmembrane segment spans residues 485 to 505; that stretch reads LPLFIYGAVPVAASAATALLP. Residues 506 to 551 are Extracellular-facing; that stretch reads ETLGQPLPDTVQDLESRRRGKPRRQQQEQQKQMVPLQASVQEKNGL. The tract at residues 520-551 is disordered; it reads ESRRRGKPRRQQQEQQKQMVPLQASVQEKNGL.

The protein belongs to the major facilitator (TC 2.A.1) superfamily. Organic cation transporter (TC 2.A.1.19) family. Post-translationally, glycosylated. Glycosylation is necessary for proper targeting of the transporter to the plasma membrane.

The protein resides in the basolateral cell membrane. The protein localises to the basal cell membrane. It catalyses the reaction (6R)-L-erythro-5,6,7,8-tetrahydrobiopterin(out) + a dicarboxylate(in) = (6R)-L-erythro-5,6,7,8-tetrahydrobiopterin(in) + a dicarboxylate(out). It carries out the reaction L-erythro-7,8-dihydrobiopterin(out) + a dicarboxylate(in) = L-erythro-7,8-dihydrobiopterin(in) + a dicarboxylate(out). The catalysed reaction is L-sepiapterin(out) + a dicarboxylate(in) = L-sepiapterin(in) + a dicarboxylate(out). The enzyme catalyses prostaglandin F2alpha(out) + a dicarboxylate(in) = prostaglandin F2alpha(in) + a dicarboxylate(out). It catalyses the reaction prostaglandin E2(out) + a dicarboxylate(in) = prostaglandin E2(in) + a dicarboxylate(out). It carries out the reaction 3',5'-cyclic AMP(out) + a dicarboxylate(in) = 3',5'-cyclic AMP(in) + a dicarboxylate(out). The catalysed reaction is 3',5'-cyclic GMP(out) + a dicarboxylate(in) = 3',5'-cyclic GMP(in) + a dicarboxylate(out). The enzyme catalyses urate(out) + a dicarboxylate(in) = urate(in) + a dicarboxylate(out). It catalyses the reaction kynurenate(out) + glutarate(in) = kynurenate(in) + glutarate(out). It carries out the reaction (indol-3-yl)acetate(out) + a dicarboxylate(in) = (indol-3-yl)acetate(in) + a dicarboxylate(out). The catalysed reaction is indoxyl sulfate(out) + a dicarboxylate(in) = indoxyl sulfate(in) + a dicarboxylate(out). The enzyme catalyses N-benzoylglycine(out) + a dicarboxylate(in) = N-benzoylglycine(in) + a dicarboxylate(out). It catalyses the reaction 3-carboxy-4-methyl-5-propyl-2-furanpropanoate(out) + a dicarboxylate(in) = 3-carboxy-4-methyl-5-propyl-2-furanpropanoate(in) + a dicarboxylate(out). Functionally, secondary active transporter that functions as a Na(+)-independent organic anion (OA)/dicarboxylate antiporter where the uptake of one molecule of OA into the cell is coupled with an efflux of one molecule of intracellular dicarboxylate such as 2-oxoglutarate or glutarate. Mediates the uptake of OA across the basolateral side of proximal tubule epithelial cells, thereby contributing to the renal elimination of endogenous OA from the systemic circulation into the urine. Functions as a biopterin transporters involved in the uptake and the secretion of coenzymes tetrahydrobiopterin (BH4), dihydrobiopterin (BH2) and sepiapterin to urine, thereby determining baseline levels of blood biopterins. Transports prostaglandin E2 (PGE2) and prostaglandin F2-alpha (PGF2-alpha) and may contribute to their renal excretion. Also mediates the uptake of cyclic nucleotides such as cAMP and cGMP. Involved in the transport of neuroactive tryptophan metabolites kynurenate (KYNA) and xanthurenate (XA) and may contribute to their secretion from the brain. May transport glutamate. Also involved in the disposition of uremic toxins and potentially toxic xenobiotics by the renal organic anion secretory pathway, helping reduce their undesired toxicological effects on the body. Uremic toxins include the indoxyl sulfate (IS), hippurate/N-benzoylglycine (HA), indole acetate (IA), 3-carboxy-4- methyl-5-propyl-2-furanpropionate (CMPF) and urate. Xenobiotics include the mycotoxin ochratoxin (OTA). May also contribute to the transport of organic compounds in testes across the blood-testis-barrier. May also work as a bidirectional OA/dicarboxylate exchanger. The protein is Solute carrier family 22 member 6 of Oryctolagus cuniculus (Rabbit).